A 424-amino-acid polypeptide reads, in one-letter code: GTPase Obg (424 aa).

Residues 2-158 (AKFIDQVKIM…YEANIVLKIL (157 aa)) enclose the Obg domain. An OBG-type G domain is found at 159–326 (SDVGLVGLPS…LKKIIWEFLE (168 aa)). Residues 165-172 (GLPSCGKS), 190-194 (FTTLV), 211-214 (DLPG), 280-283 (NKSD), and 307-309 (SAL) contribute to the GTP site. S172 and T192 together coordinate Mg(2+). The OCT domain occupies 344 to 422 (KEINYEPDFV…IYQHKFEWEE (79 aa)).

This sequence belongs to the TRAFAC class OBG-HflX-like GTPase superfamily. OBG GTPase family. Monomer. The cofactor is Mg(2+).

It is found in the cytoplasm. An essential GTPase which binds GTP, GDP and possibly (p)ppGpp with moderate affinity, with high nucleotide exchange rates and a fairly low GTP hydrolysis rate. Plays a role in control of the cell cycle, stress response, ribosome biogenesis and in those bacteria that undergo differentiation, in morphogenesis control. The polypeptide is GTPase Obg (Mycoplasmopsis synoviae (strain 53) (Mycoplasma synoviae)).